A 312-amino-acid polypeptide reads, in one-letter code: Protein atonal (312 aa).

Disordered regions lie at residues 136–174 and 220–248; these read SNVGTCKTIPASAGPKPKRSYTKKNQPSTTATSTPTAAA and NDGSFDLADGENQDAAAGGSGKKRRGKQI. Over residues 162-174 the composition is skewed to low complexity; it reads PSTTATSTPTAAA. The bHLH domain maps to 255–307; it reads KRRLAANARERRRMQNLNQAFDRLRQYLPCLGNDRQLSKHETLQMAQTYISAL.

Efficient DNA binding requires dimerization with another bHLH protein. Forms a heterodimer with Daughterless. As to expression, proneural clusters and sense organ precursors of the chordotonal organs, optic furrow of the eye-antennal disk and developing brain lobe.

Its subcellular location is the nucleus. Functionally, developmental protein involved in neurogenesis. Required for the formation of chordotonal organs and photoreceptors. Seems to bind to E boxes. Specifically required for the photoreceptor R8 selection. The polypeptide is Protein atonal (ato) (Drosophila melanogaster (Fruit fly)).